The primary structure comprises 587 residues: Folylpolyglutamate synthase, mitochondrial (587 aa).

The N-terminal 42 residues, 1–42 (MSWARSRLCSTLSLAAVSARGATTEGAARRGMSAWPAPQEPG), are a transit peptide targeting the mitochondrion. An ATP-binding site is contributed by 106-109 (GKGS). Positions 130, 200, and 228 each coordinate Mg(2+). Residues Arg363 and Asp377 each contribute to the ATP site. Phosphoserine is present on Ser539.

The protein belongs to the folylpolyglutamate synthase family. Monomer. The cofactor is a monovalent cation. With non-specific probe, highest content in kidney and liver and lowest in spleen, lung and small intestine, and readily detectable in all of the tumors except hepatoma. Isoform 1 and isoform 2 expressed in leukemic cells and isoform 4 and isoform 5 in liver cells. Isoform 1 and isoform 2 exclusively expressed in hepatoma and Lewis lung carcinoma. Isoform 1 and isoform 2 also expressed in bone marrow, small intestine and spleen. Kidney expresses isoform 1, isoform 2, isoform 4 and isoform 5.

Its subcellular location is the mitochondrion inner membrane. It localises to the mitochondrion matrix. The protein resides in the cytoplasm. The enzyme catalyses (6S)-5,6,7,8-tetrahydrofolyl-(gamma-L-Glu)(n) + L-glutamate + ATP = (6S)-5,6,7,8-tetrahydrofolyl-(gamma-L-Glu)(n+1) + ADP + phosphate + H(+). Its pathway is cofactor biosynthesis; tetrahydrofolylpolyglutamate biosynthesis. Its activity is regulated as follows. Inhibited by ammonium sulfate. Inhibited by pentaglutamate derivative of DDATHF, but isoform 2 is inhibited to a greater extent at lower concentrations of the compound that is isoform 5. Isoform 5 is virtually unaffected by H(4)PteGlu(5) and 5,10-CH(2)-H(4)PteGlu(5) at concentrations that substantially inhibits the activity of isoform 2. Isoform 2 and 5 are equally sensitive to polyglutamates of 10-CHO-H(4)-PteGlu. Functionally, catalyzes conversion of folates to polyglutamate derivatives allowing concentration of folate compounds in the cell and the intracellular retention of these cofactors, which are important substrates for most of the folate-dependent enzymes that are involved in one-carbon transfer reactions involved in purine, pyrimidine and amino acid synthesis. Dihydrofolate, tetrahydrofolate, 5,10-methylenetetrahydrofolate, 10-formyltetrahydrofolate and 5-formyltetrahydrofolate are the best substrates. Folic acid and 5-methyltetrahydrofolate can also act as substrates. In Mus musculus (Mouse), this protein is Folylpolyglutamate synthase, mitochondrial (Fpgs).